The sequence spans 108 residues: Cell division topological specificity factor (108 aa).

It belongs to the MinE family.

In terms of biological role, prevents the cell division inhibition by proteins MinC and MinD at internal division sites while permitting inhibition at polar sites. This ensures cell division at the proper site by restricting the formation of a division septum at the midpoint of the long axis of the cell. In Prochlorococcus marinus (strain MIT 9215), this protein is Cell division topological specificity factor.